The primary structure comprises 302 residues: MVWKRLGALVVFPLQMIYLVVKAAVGLVLPAKLRDLSRENVLITGGGRGIGRQLAREFAERGARKIVLWGRTEKCLKETTEEIRQMGTECHYFICDVGNREEVYQTAKAVREKVGDITILVNNAAVVHGKSLMDSDDDALPKSQHINTLGQFWTTKAFLPRMLELQNGHIVCLNSVLALSAIPGAIDYCTSKASAFAFMESLTLGLLDCPGVSATTVLPFHTSTEMFQGMRVRFPNLFPPLKPETVARRTVEAVQLNQALLLLPWTMHALIILKSILPQAALEEIHKFSGTYTCINTFKGRT.

4 helical membrane passes run 9–29 (LVVFPLQMIYLVVKAAVGLVL), 170–190 (IVCLNSVLALSAIPGAIDYCT), 195–215 (AFAFMESLTLGLLDCPGVSAT), and 253–273 (AVQLNQALLLLPWTMHALIIL). Substrate is bound at residue Ser-175. Residue Tyr-188 is the Proton acceptor of the active site.

It belongs to the short-chain dehydrogenases/reductases (SDR) family. As to expression, in the retina, expressed in cone but not rod outer segments.

The protein localises to the membrane. The enzyme catalyses all-trans-retinol + NADP(+) = all-trans-retinal + NADPH + H(+). Functionally, catalyzes the reduction of all-trans-retinal to all-trans-retinol in the presence of NADPH. The sequence is that of Short-chain dehydrogenase/reductase 3 (DHRS3) from Bos taurus (Bovine).